The following is a 235-amino-acid chain: Sperm annulus positionning complex subunit Chibby3 (235 aa).

Residues 1–41 form a disordered region; the sequence is MADSKMKWGQAWDSSLGTATTSSSSATGSPSPFQNIRVPDT. A compositionally biased stretch (low complexity) spans 14-32; the sequence is SSLGTATTSSSSATGSPSP. The leucine-zipper; mediates homodimerization stretch occupies residues 167–181; that stretch reads LLEENNYLKLQQELL.

The protein belongs to the chibby family. Homodimer. Interacts with CIBAR1 (via BAR-like domain); both proteins form a ninefold symmetric structure at the flagellar base; are recruited to the annulus in a mutually dependent manner and regulate annulus positionning. Testis-specific.

The protein resides in the cell projection. It localises to the cilium. Its subcellular location is the flagellum. Plays a key role in the correct positioning of the annulus, a septin-based ring strucure in the sperm flagellum, serving both as a physical barrier and a membrane diffusion barrier that separates the midpiece (MP) from the principal piece (PP). This positioning is essential for proper sperm motility and function. Interacts with CIBAR1 to form a complex which localizes to the curved membrane region of the flagellar pocket. By doing so, may provide stability and rigidity to the periannular membrane to prevent membrane deformation. This function is crucial for halting annulus migration at the proximal end of the fibrous sheath-containing PP. This Mus musculus (Mouse) protein is Sperm annulus positionning complex subunit Chibby3 (Cby3).